Consider the following 286-residue polypeptide: NH(3)-dependent NAD(+) synthetase (286 aa).

51 to 58 (GISGGVDS) provides a ligand contact to ATP. Asp-57 provides a ligand contact to Mg(2+). Arg-148 contributes to the deamido-NAD(+) binding site. Thr-168 contacts ATP. Glu-173 contributes to the Mg(2+) binding site. Deamido-NAD(+) is bound by residues Lys-181 and Asp-188. ATP contacts are provided by Lys-197 and Thr-219. 268-269 (HK) contributes to the deamido-NAD(+) binding site.

Belongs to the NAD synthetase family. As to quaternary structure, homodimer.

The catalysed reaction is deamido-NAD(+) + NH4(+) + ATP = AMP + diphosphate + NAD(+) + H(+). Its pathway is cofactor biosynthesis; NAD(+) biosynthesis; NAD(+) from deamido-NAD(+) (ammonia route): step 1/1. Functionally, catalyzes the ATP-dependent amidation of deamido-NAD to form NAD. Uses ammonia as a nitrogen source. The polypeptide is NH(3)-dependent NAD(+) synthetase (Paraburkholderia phytofirmans (strain DSM 17436 / LMG 22146 / PsJN) (Burkholderia phytofirmans)).